Reading from the N-terminus, the 349-residue chain is S-adenosylmethionine:tRNA ribosyltransferase-isomerase (349 aa).

It belongs to the QueA family. Monomer.

It localises to the cytoplasm. It catalyses the reaction 7-aminomethyl-7-carbaguanosine(34) in tRNA + S-adenosyl-L-methionine = epoxyqueuosine(34) in tRNA + adenine + L-methionine + 2 H(+). The protein operates within tRNA modification; tRNA-queuosine biosynthesis. Functionally, transfers and isomerizes the ribose moiety from AdoMet to the 7-aminomethyl group of 7-deazaguanine (preQ1-tRNA) to give epoxyqueuosine (oQ-tRNA). This is S-adenosylmethionine:tRNA ribosyltransferase-isomerase from Cupriavidus pinatubonensis (strain JMP 134 / LMG 1197) (Cupriavidus necator (strain JMP 134)).